Reading from the N-terminus, the 268-residue chain is 4-hydroxy-tetrahydrodipicolinate reductase (268 aa).

Residues 10–15, Asp-36, 99–101, and 123–126 each bind NAD(+); these read GAGGRM, GTT, and APNM. His-156 serves as the catalytic Proton donor/acceptor. His-157 is a (S)-2,3,4,5-tetrahydrodipicolinate binding site. Lys-160 functions as the Proton donor in the catalytic mechanism. 166-167 contributes to the (S)-2,3,4,5-tetrahydrodipicolinate binding site; the sequence is GT.

Belongs to the DapB family.

Its subcellular location is the cytoplasm. The catalysed reaction is (S)-2,3,4,5-tetrahydrodipicolinate + NAD(+) + H2O = (2S,4S)-4-hydroxy-2,3,4,5-tetrahydrodipicolinate + NADH + H(+). It carries out the reaction (S)-2,3,4,5-tetrahydrodipicolinate + NADP(+) + H2O = (2S,4S)-4-hydroxy-2,3,4,5-tetrahydrodipicolinate + NADPH + H(+). It participates in amino-acid biosynthesis; L-lysine biosynthesis via DAP pathway; (S)-tetrahydrodipicolinate from L-aspartate: step 4/4. Catalyzes the conversion of 4-hydroxy-tetrahydrodipicolinate (HTPA) to tetrahydrodipicolinate. This is 4-hydroxy-tetrahydrodipicolinate reductase from Dechloromonas aromatica (strain RCB).